The primary structure comprises 450 residues: Protein tweety homolog 1 (450 aa).

The Extracellular portion of the chain corresponds to 1–43 (MGAPPGYRPSAWVHLLHQLPRADFQLRPVPSGFAPRDQEYQQA). The helical transmembrane segment at 44–64 (LLLVAALAGLGLGLSLIFIAV) threads the bilayer. Residues 65 to 88 (YLIRFCCCRPPEPPGAKSPPPGGG) are Cytoplasmic-facing. Residues 89–109 (CVTWSCIAALLVGCAGIGIGF) traverse the membrane as a helical segment. At 110 to 214 (YGNSETSDGV…DVTFVEEYRW (105 aa)) the chain is on the extracellular side. N-linked (GlcNAc...) asparagine glycosylation is present at asparagine 130. The chain crosses the membrane as a helical span at residues 215 to 235 (LAYVLLLLLVLLVCLFTLLGL). Residues 236-240 (AKQSK) are Cytoplasmic-facing. A helical membrane pass occupies residues 241–261 (WLVVVMTAMSLLVLVLSWGSM). Residues 262-390 (GLEAATAVGL…LRGLCEDALE (129 aa)) lie on the Extracellular side of the membrane. 2 disulfides stabilise this stretch: cysteine 275–cysteine 385 and cysteine 303–cysteine 370. Residues asparagine 284 and asparagine 355 are each glycosylated (N-linked (GlcNAc...) asparagine). The helical transmembrane segment at 391-411 (GLLFLMLFSLLSAGALATTLC) threads the bilayer. Residues 412–450 (SLPRAWALFPPSDDYDDTDDDDPFNPQESKRFVQWQSSI) are Cytoplasmic-facing. Positions 428–450 (DTDDDDPFNPQESKRFVQWQSSI) are disordered. Residue serine 440 is modified to Phosphoserine.

This sequence belongs to the tweety family. In terms of assembly, homotetramer; disulfide-linked. Homodimer. N-glycosylated. Contains high-mannose, hybrid and complex oligosaccharides.

The protein localises to the cell membrane. It carries out the reaction chloride(in) = chloride(out). The enzyme catalyses L-glutamate(out) = L-glutamate(in). Its function is as follows. Calcium-independent, swelling-dependent volume-regulated anion channel (VRAC-swell) which plays a pivotal role in the process of regulatory volume decrease (RVD) in the brain through the efflux of anions like chloride and organic osmolytes like glutamate. This Rattus norvegicus (Rat) protein is Protein tweety homolog 1 (Ttyh1).